Reading from the N-terminus, the 982-residue chain is E3 ubiquitin-protein ligase CBL-B (982 aa).

The tract at residues 35–167 is 4H; it reads PPKQAAADRR…KAIFPNGQFQ (133 aa). Positions 35–343 constitute a Cbl-PTB domain; sequence PPKQAAADRR…GRSYNPDLTG (309 aa). Positions 168-240 are EF-hand-like; sequence GDNFRITKAD…FEFDIFTRLF (73 aa). 5 residues coordinate Ca(2+): Asp-221, Thr-223, Asn-225, Tyr-227, and Glu-232. The SH2-like stretch occupies residues 241–343; sequence QPWGSILRNW…GRSYNPDLTG (103 aa). A Phosphoserine; by PKC/PRKCQ modification is found at Ser-282. 4-O-phospho-L-tyrosine is bound at residue Arg-286. A linker region spans residues 344–372; that stretch reads LCEPTPHDHIKVTQEQYELYCEMGSTFQL. Position 363 is a phosphotyrosine (Tyr-363). Residues 373-412 form an RING-type zinc finger; the sequence is CKICAENDKDVKIEPCGHLMCTSCLTAWQESDGQGCPFCR. Residues 466–571 are disordered; sequence NVRKCTDRQN…PPPIPPDNRL (106 aa). The span at 473-486 shows a compositional bias: polar residues; it reads RQNSPVTSPGSSPL. A phosphoserine mark is found at Ser-476, Ser-480, Ser-484, Ser-521, Ser-525, and Ser-529. The interval 543–568 is interaction with VAV1; that stretch reads PLPAPPPPLRDPPPPPPERPPPIPPD. The span at 544–567 shows a compositional bias: pro residues; the sequence is LPAPPPPLRDPPPPPPERPPPIPP. At Ser-634 the chain carries Phosphoserine. Phosphotyrosine is present on residues Tyr-665 and Tyr-709. Disordered regions lie at residues 688–731 and 769–929; these read GPLA…NVKP and FDSA…EAAL. Positions 715–725 are enriched in polar residues; the sequence is HPVSLNSQPSH. A compositionally biased stretch (pro residues) spans 819–828; the sequence is PSLPPPPPPA. A compositionally biased stretch (low complexity) spans 838-848; it reads PPGSSSRPSSG. The segment covering 880–899 has biased composition (polar residues); the sequence is VKTNRTSQDYDQLPSCSDGS. Residue Tyr-889 is modified to Phosphotyrosine. The segment at 891–927 is interaction with SH3KBP1; the sequence is QLPSCSDGSQAPARPPKPRPRRTAPEIHHRKPHGPEA. A compositionally biased stretch (basic residues) spans 906–922; the sequence is PKPRPRRTAPEIHHRKP. A UBA domain is found at 931–970; it reads NVDAKIAKLMGEGYAFEEVKRALEIAQNNVEVARSILREF.

Interacts with SH3 domain-containing proteins LCK, CRK and SORBS1. Interacts with LCP2 and ZAP70. Interacts with CBL. Interacts with SH3 domain-containing proteins VAV1, FYN, FGR, PLCG1, GRB2, CRKL, PIK3R1 and SH3KBP1/CIN85. Identified in heterotrimeric complexes with SH3KBP1/CIN85, CD2AP and ARHGEF7, where one CBLB peptide binds two copies of the other protein. Interacts with poly-ubiquitinated proteins. Dimerization is required for the binding of poly-ubiquitin, but not for the binding of mono-ubiquitin. Interacts with EGFR (phosphorylated). Interacts with IFT20. Post-translationally, phosphorylated on tyrosine and serine residues upon TCR or BCR activation, and upon various types of cell stimulation. In terms of processing, auto-ubiquitinated upon EGF-mediated cell activation or upon T-cell costimulation by CD28; which promotes proteasomal degradation. Expressed in placenta, heart, lung, kidney, spleen, ovary and testis, as well as fetal brain and liver and hematopoietic cell lines, but not in adult brain, liver, pancreas, salivary gland, or skeletal muscle. Present in lymphocytes (at protein level).

The protein resides in the cytoplasm. The catalysed reaction is S-ubiquitinyl-[E2 ubiquitin-conjugating enzyme]-L-cysteine + [acceptor protein]-L-lysine = [E2 ubiquitin-conjugating enzyme]-L-cysteine + N(6)-ubiquitinyl-[acceptor protein]-L-lysine.. It participates in protein modification; protein ubiquitination. In terms of biological role, E3 ubiquitin-protein ligase which accepts ubiquitin from specific E2 ubiquitin-conjugating enzymes, and transfers it to substrates, generally promoting their degradation by the proteasome. Negatively regulates TCR (T-cell receptor), BCR (B-cell receptor) and FCER1 (high affinity immunoglobulin epsilon receptor) signal transduction pathways. In naive T-cells, inhibits VAV1 activation upon TCR engagement and imposes a requirement for CD28 costimulation for proliferation and IL-2 production. Also acts by promoting PIK3R1/p85 ubiquitination, which impairs its recruitment to the TCR and subsequent activation. In activated T-cells, inhibits PLCG1 activation and calcium mobilization upon restimulation and promotes anergy. In B-cells, acts by ubiquitinating SYK and promoting its proteasomal degradation. Slightly promotes SRC ubiquitination. May be involved in EGFR ubiquitination and internalization. May be functionally coupled with the E2 ubiquitin-protein ligase UB2D3. In association with CBL, required for proper feedback inhibition of ciliary platelet-derived growth factor receptor-alpha (PDGFRA) signaling pathway via ubiquitination and internalization of PDGFRA. In Homo sapiens (Human), this protein is E3 ubiquitin-protein ligase CBL-B (CBLB).